The primary structure comprises 184 residues: Guanylate kinase (184 aa).

Residues 4–182 form the Guanylate kinase-like domain; that stretch reads MGLTVLSGPS…AAARLVALMI (179 aa). Residue 11–18 participates in ATP binding; it reads GPSGVGKD.

This sequence belongs to the guanylate kinase family.

It is found in the cytoplasm. It catalyses the reaction GMP + ATP = GDP + ADP. Functionally, essential for recycling GMP and indirectly, cGMP. The chain is Guanylate kinase from Frankia casuarinae (strain DSM 45818 / CECT 9043 / HFP020203 / CcI3).